Reading from the N-terminus, the 200-residue chain is Probable molybdenum cofactor guanylyltransferase (200 aa).

Residues 9 to 11, lysine 21, aspartate 69, and aspartate 100 each bind GTP; that span reads LAG. Residue aspartate 100 participates in Mg(2+) binding.

This sequence belongs to the MobA family. It depends on Mg(2+) as a cofactor.

It is found in the cytoplasm. It carries out the reaction Mo-molybdopterin + GTP + H(+) = Mo-molybdopterin guanine dinucleotide + diphosphate. Its function is as follows. Transfers a GMP moiety from GTP to Mo-molybdopterin (Mo-MPT) cofactor (Moco or molybdenum cofactor) to form Mo-molybdopterin guanine dinucleotide (Mo-MGD) cofactor. This Bacillus cereus (strain B4264) protein is Probable molybdenum cofactor guanylyltransferase.